Consider the following 511-residue polypeptide: Cytochrome P450 26B1 (511 aa).

C440 contributes to the heme binding site.

This sequence belongs to the cytochrome P450 family. Requires heme as cofactor.

The protein resides in the endoplasmic reticulum membrane. It is found in the microsome membrane. It catalyses the reaction all-trans-retinoate + reduced [NADPH--hemoprotein reductase] + O2 = all-trans-4-hydroxyretinoate + oxidized [NADPH--hemoprotein reductase] + H2O + H(+). It carries out the reaction all-trans-retinoate + reduced [NADPH--hemoprotein reductase] + O2 = all-trans-18-hydroxyretinoate + oxidized [NADPH--hemoprotein reductase] + H2O + H(+). A cytochrome P450 monooxygenase involved in the metabolism of retinoates (RAs), the active metabolites of vitamin A, and critical signaling molecules in animals. RAs exist as at least four different isomers: all-trans-RA (atRA), 9-cis-RA, 13-cis-RA, and 9,13-dicis-RA, where atRA is considered to be the biologically active isomer, although 9-cis-RA and 13-cis-RA also have activity. Catalyzes the hydroxylation of atRA primarily at C-4 and C-18, thereby contributing to the regulation of atRA homeostasis and signaling. Hydroxylation of atRA limits its biological activity and initiates a degradative process leading to its eventual elimination. Involved in the convertion of atRA to all-trans-4-oxo-RA. Can oxidize all-trans-13,14-dihydroretinoate (DRA) to metabolites which could include all-trans-4-oxo-DRA, all-trans-4-hydroxy-DRA, all-trans-5,8-epoxy-DRA, and all-trans-18-hydroxy-DRA. Plays a role in skeletal development, both at the level of patterning and in the ossification of bone and the establishment of some synovial joints. In Danio rerio (Zebrafish), this protein is Cytochrome P450 26B1.